The following is a 130-amino-acid chain: Holin-like protein CidA (130 aa).

4 helical membrane-spanning segments follow: residues 6–26 (FVIKLILQLALIMLITFIGTE), 31–51 (LHIPLAGSIVGLMLFFLLLQF), 65–85 (FLLKTMVFFFIPSVVGIMDVA), and 93–113 (ILFFIVIIIGTCLVALSSGYI).

It belongs to the CidA/LrgA family. CidA subfamily.

Its subcellular location is the cell membrane. Increases the activity of extracellular murein hydrolases possibly by mediating their export via hole formation. Inhibited by the antiholin-like proteins LrgAB. In an unstressed cell, the LrgAB products probably inhibit the function of the CidAB proteins. When a cell is stressed by the addition of antibiotics or by other factors in the environment, the CidAB proteins possibly oligomerize within the bacterial cell membrane, creating lesions that disrupt the proton motive force, which in turn results in loss of cell viability. These lesions are also hypothesized to regulate the subsequent cell lysis by either allowing the murein hydrolases access to the cell wall substrate and/or regulating their activity by a possible change in the cell wall pH that results from loss of membrane potential. The protein is Holin-like protein CidA of Staphylococcus epidermidis (strain ATCC 35984 / DSM 28319 / BCRC 17069 / CCUG 31568 / BM 3577 / RP62A).